The sequence spans 445 residues: Tubulin beta-3 chain (445 aa).

8 residues coordinate GTP: Gln-11, Glu-69, Ser-138, Gly-142, Thr-143, Gly-144, Asn-204, and Asn-226. Glu-69 provides a ligand contact to Mg(2+). Residues 421–445 (EYQQYQDATADEEEEYDEEEEEEAA) form a disordered region. Positions 429 to 445 (TADEEEEYDEEEEEEAA) are enriched in acidic residues.

This sequence belongs to the tubulin family. In terms of assembly, dimer of alpha and beta chains. A typical microtubule is a hollow water-filled tube with an outer diameter of 25 nm and an inner diameter of 15 nM. Alpha-beta heterodimers associate head-to-tail to form protofilaments running lengthwise along the microtubule wall with the beta-tubulin subunit facing the microtubule plus end conferring a structural polarity. Microtubules usually have 13 protofilaments but different protofilament numbers can be found in some organisms and specialized cells. Mg(2+) serves as cofactor.

The protein localises to the cytoplasm. It localises to the cytoskeleton. Its function is as follows. Tubulin is the major constituent of microtubules, a cylinder consisting of laterally associated linear protofilaments composed of alpha- and beta-tubulin heterodimers. Microtubules grow by the addition of GTP-tubulin dimers to the microtubule end, where a stabilizing cap forms. Below the cap, tubulin dimers are in GDP-bound state, owing to GTPase activity of alpha-tubulin. This chain is Tubulin beta-3 chain (TUBB3), found in Triticum aestivum (Wheat).